The sequence spans 210 residues: Thymidylate kinase (210 aa).

10-17 (GPEGAGKS) contributes to the ATP binding site.

It belongs to the thymidylate kinase family.

The catalysed reaction is dTMP + ATP = dTDP + ADP. Phosphorylation of dTMP to form dTDP in both de novo and salvage pathways of dTTP synthesis. In Ectopseudomonas mendocina (strain ymp) (Pseudomonas mendocina), this protein is Thymidylate kinase.